We begin with the raw amino-acid sequence, 100 residues long: Large ribosomal subunit protein uL23 (100 aa).

The protein belongs to the universal ribosomal protein uL23 family. As to quaternary structure, part of the 50S ribosomal subunit. Contacts protein L29, and trigger factor when it is bound to the ribosome.

In terms of biological role, one of the early assembly proteins it binds 23S rRNA. One of the proteins that surrounds the polypeptide exit tunnel on the outside of the ribosome. Forms the main docking site for trigger factor binding to the ribosome. The polypeptide is Large ribosomal subunit protein uL23 (Mycobacteroides abscessus (strain ATCC 19977 / DSM 44196 / CCUG 20993 / CIP 104536 / JCM 13569 / NCTC 13031 / TMC 1543 / L948) (Mycobacterium abscessus)).